We begin with the raw amino-acid sequence, 1857 residues long: Fatty acid synthase subunit alpha (1857 aa).

Residues 96–132 (EEEPEATEPAPSATPAAPAAAPAAGAPPPPPSAGPAA) are disordered. Positions 102–119 (TEPAPSATPAAPAAAPAA) are enriched in low complexity. The region spanning 139–214 (VTAVDILRTL…ASMQATFNGQ (76 aa)) is the Carrier domain. The residue at position 174 (Ser-174) is an O-(pantetheine 4'-phosphoryl)serine. Residues 577–604 (QIIPQENGHSKKGGRSAAKRNTPTRPGK) form a disordered region. The segment at 648–845 (KNVLMTGAGA…GAVIGWTRGT (198 aa)) is beta-ketoacyl reductase. Residues 1092–1633 (LQEIVIQEDL…QKGAQVIGIH (542 aa)) enclose the Ketosynthase family 3 (KS3) domain. Catalysis depends on for beta-ketoacyl synthase activity residues Cys-1275, His-1518, and His-1559. Residues Asp-1743, Val-1744, and Glu-1745 each coordinate Mg(2+). Acetyl-CoA contacts are provided by residues 1743–1745 (DVE), Tyr-1769, Ser-1779, 1788–1798 (EAVFKSLGVSS), 1812–1815 (VDAN), and 1842–1844 (ISH). Positions 1843 and 1844 each coordinate Mg(2+).

This sequence belongs to the thiolase-like superfamily. Fungal fatty acid synthetase subunit alpha family. [Alpha(6)beta(6)] hexamers of two multifunctional subunits (alpha and beta).

It carries out the reaction acetyl-CoA + n malonyl-CoA + 2n NADPH + 4n H(+) = a long-chain-acyl-CoA + n CoA + n CO2 + 2n NADP(+).. The catalysed reaction is a fatty acyl-[ACP] + malonyl-[ACP] + H(+) = a 3-oxoacyl-[ACP] + holo-[ACP] + CO2. It catalyses the reaction a (3R)-hydroxyacyl-[ACP] + NADP(+) = a 3-oxoacyl-[ACP] + NADPH + H(+). Fatty acid synthetase catalyzes the formation of long-chain fatty acids from acetyl-CoA, malonyl-CoA and NADPH. The alpha subunit contains domains for: acyl carrier protein, 3-oxoacyl-[acyl-carrier-protein] reductase, and 3-oxoacyl-[acyl-carrier-protein] synthase. The sequence is that of Fatty acid synthase subunit alpha (FAS2) from Penicillium patulum (Penicillium griseofulvum).